A 228-amino-acid chain; its full sequence is 3,4-dihydroxy-2-butanone 4-phosphate synthase (228 aa).

Residues 37 to 38 (RE), Asp42, 150 to 154 (RRGHT), and Glu174 contribute to the D-ribulose 5-phosphate site. Glu38 lines the Mg(2+) pocket. His153 is a Mg(2+) binding site.

Belongs to the DHBP synthase family. As to quaternary structure, homodimer. Mg(2+) is required as a cofactor. It depends on Mn(2+) as a cofactor.

The enzyme catalyses D-ribulose 5-phosphate = (2S)-2-hydroxy-3-oxobutyl phosphate + formate + H(+). Its pathway is cofactor biosynthesis; riboflavin biosynthesis; 2-hydroxy-3-oxobutyl phosphate from D-ribulose 5-phosphate: step 1/1. Its function is as follows. Catalyzes the conversion of D-ribulose 5-phosphate to formate and 3,4-dihydroxy-2-butanone 4-phosphate. This Photobacterium profundum (strain SS9) protein is 3,4-dihydroxy-2-butanone 4-phosphate synthase.